We begin with the raw amino-acid sequence, 156 residues long: Snaclec A6 (156 aa).

The N-terminal stretch at 1–23 is a signal peptide; sequence MGRSISVSFGLLVVFLSLSGTGA. Disulfide bonds link cysteine 27–cysteine 38, cysteine 55–cysteine 154, and cysteine 129–cysteine 146. In terms of domain architecture, C-type lectin spans 34-155; it reads HEGHCYKVFN…CGKPYRFTCE (122 aa).

Belongs to the snaclec family. As to quaternary structure, heterodimer; disulfide-linked. Expressed by the venom gland.

It localises to the secreted. Interferes with one step of hemostasis (modulation of platelet aggregation, or coagulation cascade, for example). The chain is Snaclec A6 from Macrovipera lebetinus (Levantine viper).